We begin with the raw amino-acid sequence, 3573 residues long: Zinc finger homeobox protein 4 (3573 aa).

The span at 1 to 28 (METCDSPTISRQENGQSTSKLCGTTQLD) shows a compositional bias: polar residues. 3 disordered regions span residues 1–54 (METC…LRTD), 425–479 (LSHS…DTYS), and 522–606 (TSSS…GSPG). Basic and acidic residues-rich tracts occupy residues 39 to 54 (EPDRENSSTDDNLRTD) and 434 to 452 (KLSESKDQENNCERQKETN). Residues 468-479 (EPVEEEDEDTYS) show a composition bias toward acidic residues. Positions 585 to 599 (SVTPHQHSFTPSTPS) are enriched in polar residues. C2H2-type zinc fingers lie at residues 609–632 (IECPKCDTVLGSSRSLGGHMTMMH), 640–663 (LKCPKCNWHYKYQQTLEAHMKEKH), and 695–719 (FRCEVCNYSTTTKGNLSIHMQSDKH). Residues 763-785 (WRCEVCDYETNVARNLRIHMTSE) form a C2H2-type 4; degenerate zinc finger. C2H2-type zinc fingers lie at residues 913 to 937 (YQCKLCNYNTQLKANFQLHCKTDKH), 969 to 991 (LKCNACDYYTNSVDKLRLHTTNH), and 1017 to 1041 (YYCALCDYSTKVKLNLVQHVRSVKH). The interval 1096–1132 (GEDTEGSAKSTSVAIGDDKDSSERDNTEAKKSSKDSV) is disordered. The segment covering 1111–1129 (GDDKDSSERDNTEAKKSSK) has biased composition (basic and acidic residues). 2 consecutive C2H2-type zinc fingers follow at residues 1168–1191 (YQCPYCNYNSRDPNRIQMHVLSQH) and 1197–1220 (ICCPLCQDVLSNKMHLQLHLTHLH). A disordered region spans residues 1250-1340 (AASEKSERDT…EQQKKQQLSV (91 aa)). The span at 1277–1306 (VDEKSTPGTDESKPGMEIKSEEQKPPKESA) shows a compositional bias: basic and acidic residues. Over residues 1322–1340 (TDSMPDQLNEQQKKQQLSV) the composition is skewed to polar residues. 2 consecutive C2H2-type zinc fingers follow at residues 1348 to 1370 (YRCNHCSLAFKTMQKLQIHSQYH) and 1376 to 1399 (TMCSLCQRSFRTFQALKKHLEAGH). Positions 1442 to 1476 (YEMEQEGKASPVGSDSSSIPDDMGSEPKRTLPFRK) are disordered. C2H2-type zinc fingers lie at residues 1492–1518 (YKCTVCKESFTQKNILLVHYNSVSHLH) and 1544–1568 (YKCSICNVAYSQSSTLEIHMRSVLH). 2 disordered regions span residues 1577–1596 (LEPSGNISSGNSVAGNVNSP) and 1795–1843 (YKES…IASG). A compositionally biased stretch (low complexity) spans 1580-1596 (SGNISSGNSVAGNVNSP). Basic and acidic residues predominate over residues 1795–1830 (YKESEEISEKQEKPKQEFTNESEGLKENKDMKKPKS). A C2H2-type 14 zinc finger spans residues 1886–1909 (LECGTCSKLFSNILILKSHQEHVH). The disordered stretch occupies residues 1933–2013 (YPISPSSPET…PSAPPQVQLP (81 aa)). Pro residues-rich tracts occupy residues 1940-1962 (PETPPPPPPPPPPPPPPPPPTPS) and 1980-2007 (LQAPPPTPPPPPPPPPPPPPPPPPPSAP). 2 DNA-binding regions (homeobox) span residues 2072–2131 (FKRP…RQRN) and 2169–2228 (KRSS…RKSY). Residues 2255 to 2279 (YQCKKCSVVFPRIFDLITHQKKQCY) form a C2H2-type 15; degenerate zinc finger. Disordered stretches follow at residues 2278–2300 (CYKDEDDDAQDESQTEDSMDASD) and 2318–2426 (SLAV…TPLQ). Residues 2281-2297 (DEDDDAQDESQTEDSMD) are compositionally biased toward acidic residues. Residues 2318–2334 (SLAVTAASSGSGSSTPL) are compositionally biased toward low complexity. Over residues 2340 to 2357 (PEPEKASPKSESTEKPKP) the composition is skewed to basic and acidic residues. Composition is skewed to low complexity over residues 2360–2373 (TISKQTDTTSQSSK) and 2382–2413 (PSDPQPSASQPQQQKQSQIIGRPPSTSQTTPV). A C2H2-type 16 zinc finger spans residues 2436-2458 (YQCDQCTVAFPTLELWQEHQHMH). Residues 2499 to 2509 (LAQMPPQTGSS) are compositionally biased toward polar residues. The tract at residues 2499–2553 (LAQMPPQTGSSHAAHPATVSGSMKRKLDDKEDNNCSEKEGGNSGEDQHRDKRLRT) is disordered. The segment covering 2523 to 2547 (RKLDDKEDNNCSEKEGGNSGEDQHR) has biased composition (basic and acidic residues). Residues 2548 to 2607 (DKRLRTTITPEQLEILYEKYLLDSNPTRKMLDHIAREVGLKKRVVQVWFQNTRARERKGQ) constitute a DNA-binding region (homeobox 3). Residues 2618 to 2641 (KRCPFCRALFKAKSALESHIRSRH) form a C2H2-type 17 zinc finger. 2 disordered regions span residues 2704 to 2788 (EMSP…PKPL) and 2820 to 2875 (FSEK…PGHK). Composition is skewed to polar residues over residues 2709–2718 (NLLSPSSFKA) and 2746–2773 (TSSINTAISDATTGDEGNNEMESTTGSS). Residues 2820-2829 (FSEKDGDHDQ) show a composition bias toward basic and acidic residues. A DNA-binding region (homeobox 4) is located at residues 2874–2933 (HKRFRTQMSNLQLKVLKACFSDYRTPTMQECEMLGNEIGLPKRVVQVWFQNARAKEKKFK). Residues 2952–2976 (PECSLCGVKYSARLSIRDHIFSKQH) form a C2H2-type 18; degenerate zinc finger. Disordered regions lie at residues 3060 to 3174 (PSSL…KHLK) and 3287 to 3343 (LQKQ…LDSK). A compositionally biased stretch (low complexity) spans 3084–3104 (PTSATSSPALSLSSAPSKPLL). Over residues 3105–3129 (QTPPPPPPPPPPPPPPPPPPPPPPS) the composition is skewed to pro residues. Over residues 3159 to 3174 (IKEEELEANKPEKHLK) the composition is skewed to basic and acidic residues. A coiled-coil region spans residues 3271-3316 (ALLQQYQQYQQNLQDSLQKQQKQQQEQQQKQVQAKSSKAENDQQQN). The span at 3287 to 3305 (LQKQQKQQQEQQQKQVQAK) shows a compositional bias: low complexity. A compositionally biased stretch (basic and acidic residues) spans 3321–3343 (SETKEDRSSATESTKEEPQLDSK). Residues 3360-3384 (FICRKCQMMFTDEDAAVNHQKSFCY) form a C2H2-type 19; degenerate zinc finger. A C2H2-type 20 zinc finger spans residues 3404–3428 (YQCLACDVAISGNEALSQHLQSSLH). 2 disordered regions span residues 3449 to 3468 (HSVCSPNPNTTSTSQSAASS) and 3518 to 3543 (TSGVQTSLPTESCSDESDSELSQKLE). Low complexity predominate over residues 3453-3468 (SPNPNTTSTSQSAASS).

The protein belongs to the krueppel C2H2-type zinc-finger protein family.

Its subcellular location is the nucleus. Its function is as follows. May play a role in neural and muscle differentiation. May be involved in transcriptional regulation. The sequence is that of Zinc finger homeobox protein 4 (ZFHX4) from Gallus gallus (Chicken).